The sequence spans 359 residues: Oplophorus-luciferin 2-monooxygenase non-catalytic subunit (359 aa).

The N-terminal stretch at 1-39 is a signal peptide; the sequence is MAVNFKFSLLTITIVVNILVYCNASAIKFDVDLEKVPSN. LRR repeat units follow at residues 135–158, 160–180, 181–203, 228–251, 255–278, 280–300, 302–325, and 331–356; these read AATL…EMSQ, TKLN…ALSS, DTLA…AFQT, SPKL…AIKL, GPTT…AVEG, QGIL…VWRP, LENL…MWLI, and LAKI…VFHA.

As to quaternary structure, heterotetramer of a catalytic 19 kDa and a non-catalytic 35 kDa subunit.

It is found in the secreted. Its function is as follows. Non-catalytic subunit of oplophorus-luciferin 2-monooxygenase. May stabilize the active conformation of the catalytic subunit. This is Oplophorus-luciferin 2-monooxygenase non-catalytic subunit from Oplophorus gracilirostris (Luminous shrimp).